A 466-amino-acid chain; its full sequence is Argininosuccinate lyase (466 aa).

Belongs to the lyase 1 family. Argininosuccinate lyase subfamily.

The protein localises to the cytoplasm. The catalysed reaction is 2-(N(omega)-L-arginino)succinate = fumarate + L-arginine. Its pathway is amino-acid biosynthesis; L-arginine biosynthesis; L-arginine from L-ornithine and carbamoyl phosphate: step 3/3. This Microcystis aeruginosa (strain NIES-843 / IAM M-2473) protein is Argininosuccinate lyase.